Consider the following 144-residue polypeptide: Large ribosomal subunit protein uL16 (144 aa).

It belongs to the universal ribosomal protein uL16 family. In terms of assembly, part of the 50S ribosomal subunit.

Functionally, binds 23S rRNA and is also seen to make contacts with the A and possibly P site tRNAs. The polypeptide is Large ribosomal subunit protein uL16 (Latilactobacillus sakei subsp. sakei (strain 23K) (Lactobacillus sakei subsp. sakei)).